We begin with the raw amino-acid sequence, 134 residues long: Protein NrdI (134 aa).

This sequence belongs to the NrdI family.

In terms of biological role, probably involved in ribonucleotide reductase function. The chain is Protein NrdI from Yersinia pseudotuberculosis serotype O:1b (strain IP 31758).